We begin with the raw amino-acid sequence, 375 residues long: Phosphoglycerate kinase (375 aa).

(2R)-3-phosphoglycerate is bound by residues Val1, Asp2, Phe3, Asn4, Arg17, Ser40, His41, Gly43, Arg44, Leu99, Arg100, His147, and Arg148. Residue Gly191 participates in ADP binding. Residue Gly191 participates in CDP binding. 2 residues coordinate AMP: Ala192 and Lys193. Ala192 contributes to the ATP binding site. Ala192 is a Mg(2+) binding site. Residue Asp196 participates in CDP binding. Asp196 contacts Mg(2+). Residue Lys197 participates in AMP binding. Lys197 is a binding site for ATP. Gly215 contacts ADP. Residue Gly215 participates in CDP binding. AMP is bound by residues Gly216 and Gly290. Residues Gly216 and Gly290 each coordinate ATP. Residues Gly315 and Phe320 each contribute to the CDP site. Phe320 contributes to the ADP binding site. Glu321 serves as a coordination point for AMP. ATP is bound by residues Glu321, Asp352, and Thr353. Mg(2+) is bound at residue Asp352.

This sequence belongs to the phosphoglycerate kinase family. In terms of assembly, monomer. Requires Mg(2+) as cofactor.

The catalysed reaction is (2R)-3-phosphoglycerate + ATP = (2R)-3-phospho-glyceroyl phosphate + ADP. It participates in carbohydrate degradation; glycolysis; pyruvate from D-glyceraldehyde 3-phosphate: step 2/5. The protein is Phosphoglycerate kinase (PGK) of Tetrahymena pyriformis.